The primary structure comprises 300 residues: Tyrosine recombinase XerD (300 aa).

Residues 5–90 (YQCDPLIDAF…SLRRFYNYLL (86 aa)) enclose the Core-binding (CB) domain. The region spanning 111–294 (HLPDSLSESQ…ARARLQELHQ (184 aa)) is the Tyr recombinase domain. Catalysis depends on residues Arg-151, Lys-175, His-246, Arg-249, and His-272. Catalysis depends on Tyr-281, which acts as the O-(3'-phospho-DNA)-tyrosine intermediate.

The protein belongs to the 'phage' integrase family. XerD subfamily. As to quaternary structure, forms a cyclic heterotetrameric complex composed of two molecules of XerC and two molecules of XerD.

It localises to the cytoplasm. Site-specific tyrosine recombinase, which acts by catalyzing the cutting and rejoining of the recombining DNA molecules. The XerC-XerD complex is essential to convert dimers of the bacterial chromosome into monomers to permit their segregation at cell division. It also contributes to the segregational stability of plasmids. This is Tyrosine recombinase XerD from Shewanella oneidensis (strain ATCC 700550 / JCM 31522 / CIP 106686 / LMG 19005 / NCIMB 14063 / MR-1).